The following is a 643-amino-acid chain: Complement component C1q receptor (643 aa).

An N-terminal signal peptide occupies residues 1–23; that stretch reads MVTSTGLLLLLGLLGQLWAGAAA. Residues 24–571 are Extracellular-facing; that stretch reads DSEAVVCEGT…HSDSDTDGQK (548 aa). Positions 31–173 constitute a C-type lectin domain; it reads EGTACYTAHW…CGTPDAPGNS (143 aa). Disulfide bonds link Cys-140-Cys-164, Cys-261-Cys-272, Cys-268-Cys-282, Cys-284-Cys-297, Cys-303-Cys-314, Cys-308-Cys-325, Cys-327-Cys-340, Cys-346-Cys-355, Cys-351-Cys-364, Cys-366-Cys-380, Cys-386-Cys-397, Cys-393-Cys-406, Cys-408-Cys-422, Cys-428-Cys-437, Cys-433-Cys-446, and Cys-448-Cys-461. 2 EGF-like domains span residues 257-298 and 299-341; these read PKFG…VTCA and SRNP…VHCV. Asn-322 is a glycosylation site (N-linked (GlcNAc...) asparagine). In terms of domain architecture, EGF-like 3; calcium-binding spans 342-381; that stretch reads DIDECEDSPCDQECINTPGGFHCECWVGYQSSGSKEEACE. Positions 382–423 constitute an EGF-like 4; calcium-binding domain; it reads DVDECTAAYSPCAQGCTNTDGSFYCSCKEGYIMSGEDSTQCE. The region spanning 424 to 462 is the EGF-like 5; calcium-binding domain; the sequence is DIDECLGNPCDTLCINTDGSFRCGCPAGFELAPNGVSCT. The disordered stretch occupies residues 469–517; the sequence is ELPARPPQKEDKGDGKESTVPLTEMPGSLNGSKDVSNRAQTTDLSIQSD. Basic and acidic residues predominate over residues 475-485; that stretch reads PQKEDKGDGKE. A compositionally biased stretch (polar residues) spans 497 to 517; it reads LNGSKDVSNRAQTTDLSIQSD. Asn-498 carries N-linked (GlcNAc...) asparagine glycosylation. Residues 572-592 form a helical membrane-spanning segment; the sequence is LLLFYILGTVVAISLLLALAL. Over 593–643 the chain is Cytoplasmic; sequence GLLIYLKRKAKKEEIKEKKAQNAADSYSWIPERAESRAPENQYSPTPGTDC. The disordered stretch occupies residues 606–643; it reads EIKEKKAQNAADSYSWIPERAESRAPENQYSPTPGTDC. A Phosphoserine modification is found at Ser-618. Phosphotyrosine is present on residues Tyr-619 and Tyr-635. The segment covering 631–643 has biased composition (polar residues); the sequence is PENQYSPTPGTDC.

Homodimer. Interacts with C1QBP; the association may represent a cell surface C1q receptor. Interacts with surfactant protein A/SFTPA1. Interacts with multimerin-2/MMRN2. Interacts with DAG1; this interaction plays an important role in endothelial cell migration. Interacts with CBL. Interacts with IGFBP7. Interacts with VEGFR2. In terms of processing, N- and O-glycosylated. Post-translationally, phosphorylated on Tyr-619 and Tyr-635 by SRC; these phosphorylations promote endothelial cell adhesion and migration. In terms of tissue distribution, widely expressed. Highly expressed in lung and heart. Expressed at lower level in brain, thymus, liver, spleen, intestine, kidney, adrenal gland, muscle and testis. Expressed on endothelial cells, platelets, undifferentiated monocytes and circulating natural killer cells.

The protein resides in the cell membrane. Its function is as follows. Cell surface receptor that plays a role in various physiological processes including inflammation, phagocytosis, and cell adhesion. Plays a role in phagocytosis and enhances the uptake of apoptotic cells and immune complexes by acting as a receptor for defense collagens including surfactant protein A/SFTPA1, C1q, and mannose-binding lectin (MBL2). Plays a role in the regulation of endothelial cell function and adhesion by activating angiogenesis. Mechanistically, exerts its angiogenic function by associating with beta-dystroglycan, leading to SRC-dependent phosphorylation and subsequent recruitment of CBL. In turn, CBL provides a docking site for downstream signaling components, such as CRKL to enhance cell migration. Participates in angiogenesis also by acting as a receptor for the ECM pan-endothelial glycoprotein multimerin-2/MMRN2 and IGFBP7 ligands. Both ligands play a non-redundant role in CD93-mediated endothelial cell function. Acts as a key regulator of endothelial barrier function through modulating VEGFR2 function. The protein is Complement component C1q receptor (Cd93) of Rattus norvegicus (Rat).